A 38-amino-acid chain; its full sequence is Photosystem I reaction center subunit IX (38 aa).

A helical transmembrane segment spans residues phenylalanine 4–isoleucine 24.

This sequence belongs to the PsaJ family.

The protein localises to the cellular thylakoid membrane. Functionally, may help in the organization of the PsaE and PsaF subunits. The polypeptide is Photosystem I reaction center subunit IX (Parasynechococcus marenigrum (strain WH8102)).